The chain runs to 226 residues: uncharacterized protein (226 aa).

It to L.innocua lin1255, lin1742 and lin2408.

This is an uncharacterized protein from Listeria innocua serovar 6a (strain ATCC BAA-680 / CLIP 11262).